The primary structure comprises 309 residues: tRNA dimethylallyltransferase (309 aa).

Position 9-16 (9-16 (GPTAVGKT)) interacts with ATP. 11–16 (TAVGKT) lines the substrate pocket. An interaction with substrate tRNA region spans residues 34–37 (DSMQ).

It belongs to the IPP transferase family. As to quaternary structure, monomer. The cofactor is Mg(2+).

It carries out the reaction adenosine(37) in tRNA + dimethylallyl diphosphate = N(6)-dimethylallyladenosine(37) in tRNA + diphosphate. In terms of biological role, catalyzes the transfer of a dimethylallyl group onto the adenine at position 37 in tRNAs that read codons beginning with uridine, leading to the formation of N6-(dimethylallyl)adenosine (i(6)A). The chain is tRNA dimethylallyltransferase from Clostridium acetobutylicum (strain ATCC 824 / DSM 792 / JCM 1419 / IAM 19013 / LMG 5710 / NBRC 13948 / NRRL B-527 / VKM B-1787 / 2291 / W).